A 101-amino-acid chain; its full sequence is UPF0125 protein VC_0850 (101 aa).

This sequence belongs to the UPF0125 (RnfH) family.

The sequence is that of UPF0125 protein VC_0850 from Vibrio cholerae serotype O1 (strain ATCC 39315 / El Tor Inaba N16961).